The primary structure comprises 511 residues: Fas-activated serine/threonine kinase (511 aa).

Positions 439–497 (VVLMLRERWHFCRDGRVLLGSRALRERHLGLMGYQLLPLPFEELESQRGLPQLKSYLRQ) constitute an RAP domain.

It belongs to the FAST protein kinase family. Interacts with TIA1; the interactions leads to TIA1 phosphorylation. Interacts with TIAR. Autophosphorylated on serine/threonine residues. Activated by dephosphorylation.

The protein resides in the mitochondrion matrix. The catalysed reaction is L-seryl-[Fas-activated protein] + ATP = O-phospho-L-seryl-[Fas-activated protein] + ADP + H(+). It catalyses the reaction L-threonyl-[Fas-activated protein] + ATP = O-phospho-L-threonyl-[Fas-activated protein] + ADP + H(+). The enzyme catalyses L-seryl-[protein] + ATP = O-phospho-L-seryl-[protein] + ADP + H(+). It carries out the reaction L-threonyl-[protein] + ATP = O-phospho-L-threonyl-[protein] + ADP + H(+). Its function is as follows. Phosphorylates the splicing regulator TIA1, thereby promoting the inclusion of FAS exon 6, which leads to an mRNA encoding a pro-apoptotic form of the receptor. Required for the biogenesis of some mitochondrial-encoded mRNAs, specifically stabilizes ND6 (NADH dehydrogenase complex subunit 6) mRNA, and regulates its levels. The sequence is that of Fas-activated serine/threonine kinase (Fastk) from Mus musculus (Mouse).